The chain runs to 353 residues: Phosphate acyltransferase (353 aa).

The protein belongs to the PlsX family. Homodimer. Probably interacts with PlsY.

The protein resides in the cytoplasm. The catalysed reaction is a fatty acyl-[ACP] + phosphate = an acyl phosphate + holo-[ACP]. Its pathway is lipid metabolism; phospholipid metabolism. Functionally, catalyzes the reversible formation of acyl-phosphate (acyl-PO(4)) from acyl-[acyl-carrier-protein] (acyl-ACP). This enzyme utilizes acyl-ACP as fatty acyl donor, but not acyl-CoA. The protein is Phosphate acyltransferase of Ralstonia pickettii (strain 12J).